Consider the following 197-residue polypeptide: Transposon Tn552 resolvase (197 aa).

The 136-residue stretch at 1–136 folds into the Resolvase/invertase-type recombinase catalytic domain; the sequence is MKIGYARVST…AGRIAARARG (136 aa). The active-site O-(5'-phospho-DNA)-serine intermediate is the S9. Positions 163-182 form a DNA-binding region, H-T-H motif; that stretch reads IKTIAEQWQVSRTTIYRYLN.

This sequence belongs to the site-specific recombinase resolvase family.

Functionally, resolvase catalyzes the resolution (a site-specific recombination) of the cointegrated replicon to yield the final transposition products. The chain is Transposon Tn552 resolvase (tnpR) from Staphylococcus aureus.